The following is a 181-amino-acid chain: Isopentenyl-diphosphate Delta-isomerase (181 aa).

Mn(2+)-binding residues include His24 and His30. A Nudix hydrolase domain is found at 28-168 (LLHLAFSVLL…PDTFSVWFPT (141 aa)). The active site involves Cys68. Cys68 lines the Mg(2+) pocket. His70 is a Mn(2+) binding site. Residue Glu88 participates in Mg(2+) binding. The Mn(2+) site is built by Glu117 and Glu119. The active site involves Glu119.

Belongs to the IPP isomerase type 1 family. The cofactor is Mg(2+). Requires Mn(2+) as cofactor.

The protein localises to the cytoplasm. It carries out the reaction isopentenyl diphosphate = dimethylallyl diphosphate. Its pathway is isoprenoid biosynthesis; dimethylallyl diphosphate biosynthesis; dimethylallyl diphosphate from isopentenyl diphosphate: step 1/1. Catalyzes the 1,3-allylic rearrangement of the homoallylic substrate isopentenyl (IPP) to its highly electrophilic allylic isomer, dimethylallyl diphosphate (DMAPP). The polypeptide is Isopentenyl-diphosphate Delta-isomerase (Aliivibrio fischeri (strain ATCC 700601 / ES114) (Vibrio fischeri)).